The primary structure comprises 608 residues: MASPARAPVLALKDVRLADGAKPLFDGVDLALEPRVRACLVGRNGAGKSTLLKILAGQGVEADSGERAVQPGAKVVYVSQEPEITGETLLDYATAGGAQDYEAQAALADFGLDPDKSAKGLSGGETRRAALARAFAEQPDVLLLDEPTNHLDIFAIQTLEDELAASKCAALIVSHDRAFLNRVTERCFWLEHRKIRRLDKGFSEFEAWAESIMAADAEEARRLDKVLERENAWLARGVQGRRARNEGRRRALLALRAEKKDRQSELRGTMTMAVESAGTSGKRVVEAKGVTKRFGERTIVENFSTRILRGDRVALVGPNGAGKTTLVKLLLGELERDAGTVQLGTNLEVSYIDQARMALSDKITVWDFLTPGGGDSIIVRGHPKHVAGYAKEFLFTDAQLRQPVTSLSGGERNRLLLARALANPTNLMVLDEPTNDLDMDTLDLLEDLLADFDGTLILVSHDRDFIDRLASSTIALDGKGGVVETPGGWTDLMDQNPDFFKASKGGTAFAPVSKAATKPAPAAPAAPKKSAKLSYKDQRRLEECEALIAKSPAIIAKLEEALADPNLYTRDPATFDKTMKALDKARADLEQAEMEWLELEEKKENLAG.

2 ABC transporter domains span residues 7–217 (APVL…AADA) and 285–512 (VEAK…FAPV). Residues 42-49 (GRNGAGKS) and 317-324 (GPNGAGKT) contribute to the ATP site. The segment at 522–608 (AAPAAPKKSA…LEEKKENLAG (87 aa)) is C-terminal domain (CTD), binds DNA.

It belongs to the ABC transporter superfamily. ABCF family. Uup subfamily.

Its subcellular location is the cytoplasm. The enzyme catalyses ATP + H2O = ADP + phosphate + H(+). Probably plays a role in ribosome assembly or function. May be involved in resolution of branched DNA intermediates that result from template switching in postreplication gaps. Binds DNA and has ATPase activity. Functionally, one of a cluster of genes involved in attachment of the holdfast to the cell. The holdfast is a structure that allows the bacteria to firmly adhere to surfaces. The sequence is that of ATP-binding protein Uup from Caulobacter vibrioides (strain ATCC 19089 / CIP 103742 / CB 15) (Caulobacter crescentus).